The sequence spans 1057 residues: Carbamoyl phosphate synthase large chain (1057 aa).

The carboxyphosphate synthetic domain stretch occupies residues 1-401 (MPKRNDIKTI…SLLKAIRSLE (401 aa)). Residues Arg129, Arg169, Gly175, Gly176, Lys208, Ile210, Glu215, Gly241, Ile242, His243, Gln284, and Glu298 each contribute to the ATP site. Residues 133 to 327 (RNLMNELNEP…IAKLAAKIAV (195 aa)) form the ATP-grasp 1 domain. Residues Gln284, Glu298, and Asn300 each coordinate Mg(2+). Mn(2+)-binding residues include Gln284, Glu298, and Asn300. The interval 402 to 546 (YGVHHLGLPN…YGTYETENES (145 aa)) is oligomerization domain. Residues 547–929 (IRSDKKKVVV…ALYKGLVASG (383 aa)) form a carbamoyl phosphate synthetic domain region. Positions 671-861 (EALMQRIEIP…MANLAMKAIL (191 aa)) constitute an ATP-grasp 2 domain. ATP contacts are provided by Arg707, Arg746, Leu748, Glu752, Gly777, Val778, His779, Ser780, Gln820, and Glu832. Positions 820, 832, and 834 each coordinate Mg(2+). 3 residues coordinate Mn(2+): Gln820, Glu832, and Asn834. The region spanning 930 to 1057 (LQVKDHGTVL…ESMTFNMNQM (128 aa)) is the MGS-like domain. An allosteric domain region spans residues 930-1057 (LQVKDHGTVL…ESMTFNMNQM (128 aa)).

It belongs to the CarB family. As to quaternary structure, composed of two chains; the small (or glutamine) chain promotes the hydrolysis of glutamine to ammonia, which is used by the large (or ammonia) chain to synthesize carbamoyl phosphate. Tetramer of heterodimers (alpha,beta)4. Requires Mg(2+) as cofactor. The cofactor is Mn(2+).

The catalysed reaction is hydrogencarbonate + L-glutamine + 2 ATP + H2O = carbamoyl phosphate + L-glutamate + 2 ADP + phosphate + 2 H(+). The enzyme catalyses hydrogencarbonate + NH4(+) + 2 ATP = carbamoyl phosphate + 2 ADP + phosphate + 2 H(+). It functions in the pathway amino-acid biosynthesis; L-arginine biosynthesis; carbamoyl phosphate from bicarbonate: step 1/1. Its pathway is pyrimidine metabolism; UMP biosynthesis via de novo pathway; (S)-dihydroorotate from bicarbonate: step 1/3. Functionally, large subunit of the glutamine-dependent carbamoyl phosphate synthetase (CPSase). CPSase catalyzes the formation of carbamoyl phosphate from the ammonia moiety of glutamine, carbonate, and phosphate donated by ATP, constituting the first step of 2 biosynthetic pathways, one leading to arginine and/or urea and the other to pyrimidine nucleotides. The large subunit (synthetase) binds the substrates ammonia (free or transferred from glutamine from the small subunit), hydrogencarbonate and ATP and carries out an ATP-coupled ligase reaction, activating hydrogencarbonate by forming carboxy phosphate which reacts with ammonia to form carbamoyl phosphate. The sequence is that of Carbamoyl phosphate synthase large chain from Macrococcus caseolyticus (strain JCSC5402) (Macrococcoides caseolyticum).